We begin with the raw amino-acid sequence, 307 residues long: Olfactory receptor 12D2 (307 aa).

The Extracellular portion of the chain corresponds to 1-23 (MLNTTSVTEFLLLGVTDIQELQP). N3 carries an N-linked (GlcNAc...) asparagine glycan. The helical transmembrane segment at 24–44 (FLFVVFLTIYFISVTGNGAVL) threads the bilayer. Residues 45-52 (MIVISDPR) lie on the Cytoplasmic side of the membrane. A helical membrane pass occupies residues 53–73 (LHSLMYFFLGNLSYLDICYST). At 74–97 (VTLPKMLQNFLSTHKAISFLGCIS) the chain is on the extracellular side. Residues C95 and C187 are joined by a disulfide bond. A helical transmembrane segment spans residues 98–118 (QLHFFHSLGSTESMLFAVMAF). The Cytoplasmic segment spans residues 119-137 (DLSVAICKPLRYTVIMNPQ). Residues 138 to 158 (LCTQMAITIWVIGFFHALLHS) form a helical membrane-spanning segment. Over 159-195 (VMTSRLNFCGSNRIHHFLCDIKPLLKLACGNTELNQW) the chain is Extracellular. A helical transmembrane segment spans residues 196 to 215 (LLSTVTGTIAMGPFFLTLLS). Residues 216–236 (YFYIITYLFFKTRSCSMLCKA) are Cytoplasmic-facing. Residues 237–257 (LSTCASHFMVVILFYAPVLFT) form a helical membrane-spanning segment. Topologically, residues 258–270 (YIHPALESFMDQD) are extracellular. The helical transmembrane segment at 271–291 (RIVAIMYTVVTPVLNPLIYTL) threads the bilayer. Over 292-307 (RNKEVKGALGRVIRRL) the chain is Cytoplasmic.

This sequence belongs to the G-protein coupled receptor 1 family.

It localises to the cell membrane. Its function is as follows. Odorant receptor. This chain is Olfactory receptor 12D2 (OR12D2), found in Homo sapiens (Human).